Reading from the N-terminus, the 173-residue chain is C-phycocyanin-2 beta subunit (173 aa).

Position 73 is an N4-methylasparagine (N73). (2R,3E)-phycocyanobilin contacts are provided by C83 and C154.

It belongs to the phycobiliprotein family. In terms of assembly, heterodimer of an alpha and a beta subunit, which further assembles into trimers and the trimers into hexamers. Contains two covalently linked bilin chromophores.

Its subcellular location is the cellular thylakoid membrane. In terms of biological role, light-harvesting photosynthetic bile pigment-protein from the phycobiliprotein complex (phycobilisome, PBS). Phycocyanin is the major phycobiliprotein in the PBS rod. The chain is C-phycocyanin-2 beta subunit (cpcB2) from Synechococcus sp. (strain ATCC 27144 / PCC 6301 / SAUG 1402/1) (Anacystis nidulans).